The chain runs to 538 residues: Phosphoenolpyruvate carboxykinase (ATP) (538 aa).

3 residues coordinate substrate: Arg64, Tyr205, and Lys211. Residues Lys211, His230, and 246–254 (GLSGTGKTT) each bind ATP. 2 residues coordinate Mn(2+): Lys211 and His230. Asp267 contributes to the Mn(2+) binding site. Residues Glu295, Arg331, 447 to 448 (RI), and Thr453 each bind ATP. Arg331 provides a ligand contact to substrate.

It belongs to the phosphoenolpyruvate carboxykinase (ATP) family. Monomer. The cofactor is Mn(2+).

It localises to the cytoplasm. It catalyses the reaction oxaloacetate + ATP = phosphoenolpyruvate + ADP + CO2. Its pathway is carbohydrate biosynthesis; gluconeogenesis. Functionally, involved in the gluconeogenesis. Catalyzes the conversion of oxaloacetate (OAA) to phosphoenolpyruvate (PEP) through direct phosphoryl transfer between the nucleoside triphosphate and OAA. In Haemophilus influenzae (strain ATCC 51907 / DSM 11121 / KW20 / Rd), this protein is Phosphoenolpyruvate carboxykinase (ATP).